Consider the following 262-residue polypeptide: F-actin-capping protein subunit alpha (262 aa).

The protein belongs to the F-actin-capping protein alpha subunit family. Heterodimer of an alpha and a beta subunit.

In terms of biological role, F-actin-capping proteins bind in a Ca(2+)-independent manner to the fast growing ends of actin filaments (barbed end) thereby blocking the exchange of subunits at these ends. Unlike other capping proteins (such as gelsolin and severin), these proteins do not sever actin filaments. In Kluyveromyces lactis (strain ATCC 8585 / CBS 2359 / DSM 70799 / NBRC 1267 / NRRL Y-1140 / WM37) (Yeast), this protein is F-actin-capping protein subunit alpha (CAP1).